The chain runs to 1063 residues: MTNFKFSLLACSIAFALNASIAYAAQPTNQPTNQPTNQPTNQPTNQPTNQPTNQNSNVSEQLEQINVSGSSENINVKEKKVGETQISAKKLAKQQASDSRDLVRYETGITVVETGRTGASGYAVRGVDENRVGIMVDGLRQAETLSSQGFKELFEGYGNFNNTRNSIEIENVKTATITKGADSLKSGSGALGGSVIFETKDARDYLIDKDYYLSYKRGYQTMNNQNLKTLTLAGRSKKFDILIIDTTRDGHEIENYDYKIYPNKQADLRAVGPTREKADPYQITRQSTLIKLGFQPNENHRLSVALDDSTLETKGIDLSYALRPYSTANNEKYGERIINDQSKRKNIQFSYENFSQTPFWDHIKLSYSSQKITNKARSDEYCHQSTCNGVSNPQGLHLVEEKGVYKIKDKYGGELESKEIGWSHEFKNSKGEDADKDISQRSSLDSVLINCEKLDCSKKFRIYQEYDENSSEKYTYDDREIEVGTLPNGKKYGKIPLKKGKTPSWNGFPQETARFLFPKSYGYSTDFVNDRDLNTHTQQIKLDLDKEFHLWHTQHQLKYGGLYEKTLKSMVNHQYNTAANVQWWADYFFCARAKGGNLGEKKTPHPNVSVAGCVNGTPLHSDIGKDTYLIPVTTKNNVLYFGDNVQLTSWLGLDLNYRYDHVKYLPGYDEKTPVPGGLIAGIFVPFNEKDVVYGAYVPSGYKDCRYNTECYKKNFEENLALLLRKTDYKHHSYNLGLNLDPTDWLRVQLKYANAFRAPTSDEIYMTFKHPDFSIGPNTNLKAETAKTKEVAFTFYKENSYLTLSAFQSDYRNFIDLVFEKNKQIDKGSAIEYPFYQNQNRDQARVRGIEIASRLEMGDLFEKLQGFHLGYKLTYQKGRIKDNKLRSGYAEFLKLNPQYTAIASQDQPMNALQPTTSVYNIGYDAPSKKWGMDVYITDVAAKKAKDSFNSQWTSMVKRKENIYGTERTVPATQANGKDVKDSRGLWRNNRYTVIDTIAYWKPIKNLTFTAGVYNLTNKKYLTWDSARSVRHLGTINRVETATGKGLNRFYAPGRNYRMSVQFEF.

Residues 1–24 form the signal peptide; the sequence is MTNFKFSLLACSIAFALNASIAYA. Tandem repeats lie at residues 26 to 29, 30 to 33, 34 to 37, 38 to 41, 42 to 45, 46 to 49, and 50 to 53. The interval 26 to 53 is 7 X 4 AA tandem repeats of Q-P-T-N; sequence QPTNQPTNQPTNQPTNQPTNQPTNQPTN. A compositionally biased stretch (low complexity) spans 28-55; it reads TNQPTNQPTNQPTNQPTNQPTNQPTNQN. The disordered stretch occupies residues 28–57; sequence TNQPTNQPTNQPTNQPTNQPTNQPTNQNSN. The TonB box signature appears at 63–70; the sequence is EQINVSGS. One can recognise a TBDR plug domain in the interval 66-200; the sequence is NVSGSSENIN…LGGSVIFETK (135 aa). The TBDR beta-barrel domain maps to 208–1063; it reads DKDYYLSYKR…NYRMSVQFEF (856 aa). The TonB C-terminal box motif lies at 1046-1063; sequence NRFYAPGRNYRMSVQFEF.

It belongs to the TonB-dependent receptor family. Hemoglobin/haptoglobin binding protein subfamily.

It localises to the cell outer membrane. Functionally, acts as a receptor for hemoglobin or the hemoglobin/haptoglobin complex of the human host and is required for heme uptake. This Haemophilus influenzae (strain ATCC 51907 / DSM 11121 / KW20 / Rd) protein is Probable hemoglobin and hemoglobin-haptoglobin-binding protein 1.